The primary structure comprises 160 residues: Protein-export protein SecB (160 aa).

It belongs to the SecB family. Homotetramer, a dimer of dimers. One homotetramer interacts with 1 SecA dimer.

The protein localises to the cytoplasm. Functionally, one of the proteins required for the normal export of preproteins out of the cell cytoplasm. It is a molecular chaperone that binds to a subset of precursor proteins, maintaining them in a translocation-competent state. It also specifically binds to its receptor SecA. The protein is Protein-export protein SecB of Aliivibrio salmonicida (strain LFI1238) (Vibrio salmonicida (strain LFI1238)).